The following is a 503-amino-acid chain: Activin receptor type-1-like (503 aa).

Positions 1 to 21 (MTLGSPRRGLLMLLMALVTQG) are cleaved as a signal peptide. Residues 22-118 (DPVKPSRGPL…PSEQPGTDGQ (97 aa)) lie on the Extracellular side of the membrane. 3 disulfide bridges follow: Cys34-Cys51, Cys36-Cys41, and Cys46-Cys69. The interval 73 to 76 (HREL) is mediates specificity for BMP ligand. 2 cysteine pairs are disulfide-bonded: Cys77–Cys89 and Cys90–Cys95. A glycan (N-linked (GlcNAc...) asparagine) is linked at Asn98. The chain crosses the membrane as a helical span at residues 119-141 (LALILGPVLALLALVALGVLGLW). The Cytoplasmic segment spans residues 142 to 503 (HVRRRQEKQR…NSPEKPKVIQ (362 aa)). 3 positions are modified to phosphoserine: Ser155, Ser160, and Ser161. One can recognise a GS domain in the interval 172 to 201 (SMLGDLLDSDCTTGSGSGLPFLVQRTVARQ). Positions 202–492 (VALVECVGKG…LRIKKTLQKI (291 aa)) constitute a Protein kinase domain. Residues 208-216 (VGKGRYGEV) and Lys229 each bind ATP. Asp330 functions as the Proton acceptor in the catalytic mechanism.

Belongs to the protein kinase superfamily. TKL Ser/Thr protein kinase family. TGFB receptor subfamily. As to quaternary structure, interacts with TSC22D1/TSC-22. It depends on Mg(2+) as a cofactor. Mn(2+) serves as cofactor.

Its subcellular location is the cell membrane. The catalysed reaction is L-threonyl-[receptor-protein] + ATP = O-phospho-L-threonyl-[receptor-protein] + ADP + H(+). It catalyses the reaction L-seryl-[receptor-protein] + ATP = O-phospho-L-seryl-[receptor-protein] + ADP + H(+). Its function is as follows. Type I receptor for TGF-beta family ligands BMP9/GDF2 and BMP10 and important regulator of normal blood vessel development. On ligand binding, forms a receptor complex consisting of two type II and two type I transmembrane serine/threonine kinases. Type II receptors phosphorylate and activate type I receptors which autophosphorylate, then bind and activate SMAD transcriptional regulators. May bind activin as well. This is Activin receptor type-1-like (ACVRL1) from Pongo abelii (Sumatran orangutan).